The sequence spans 264 residues: uncharacterized protein (264 aa).

A helical transmembrane segment spans residues 9–29; sequence LVISILSLIATLSISFNIYFI.

Its subcellular location is the membrane. This is an uncharacterized protein from Ureaplasma parvum serovar 3 (strain ATCC 700970).